The chain runs to 523 residues: UvrABC system protein C (523 aa).

The 79-residue stretch at 15 to 93 folds into the GIY-YIG domain; the sequence is HLPGCYLFKD…IKKHWPRYNI (79 aa). Residues 197-232 form the UVR domain; it reads RELIESMETEMKEMAAKQMFEQAMELRDEIAALEYL.

This sequence belongs to the UvrC family. In terms of assembly, interacts with UvrB in an incision complex.

The protein localises to the cytoplasm. Its function is as follows. The UvrABC repair system catalyzes the recognition and processing of DNA lesions. UvrC both incises the 5' and 3' sides of the lesion. The N-terminal half is responsible for the 3' incision and the C-terminal half is responsible for the 5' incision. The polypeptide is UvrABC system protein C (Methanosarcina mazei (strain ATCC BAA-159 / DSM 3647 / Goe1 / Go1 / JCM 11833 / OCM 88) (Methanosarcina frisia)).